The primary structure comprises 131 residues: Large ribosomal subunit protein bL17 (131 aa).

It belongs to the bacterial ribosomal protein bL17 family. In terms of assembly, part of the 50S ribosomal subunit. Contacts protein L32.

The protein is Large ribosomal subunit protein bL17 of Paraburkholderia phymatum (strain DSM 17167 / CIP 108236 / LMG 21445 / STM815) (Burkholderia phymatum).